A 248-amino-acid polypeptide reads, in one-letter code: Small ribosomal subunit protein uS3 (248 aa).

A KH type-2 domain is found at 39–108 (IRKLVDKKLS…TVAVNVAEIP (70 aa)). A disordered region spans residues 214–248 (ETIARPQRRNDERRPEGGDRANRRRPTARRRAGGE). Basic and acidic residues predominate over residues 221 to 234 (RRNDERRPEGGDRA). Residues 235–248 (NRRRPTARRRAGGE) are compositionally biased toward basic residues.

It belongs to the universal ribosomal protein uS3 family. In terms of assembly, part of the 30S ribosomal subunit. Forms a tight complex with proteins S10 and S14.

Binds the lower part of the 30S subunit head. Binds mRNA in the 70S ribosome, positioning it for translation. This chain is Small ribosomal subunit protein uS3, found in Deinococcus deserti (strain DSM 17065 / CIP 109153 / LMG 22923 / VCD115).